A 383-amino-acid chain; its full sequence is Histidinol-phosphate aminotransferase (383 aa).

Lysine 240 is subject to N6-(pyridoxal phosphate)lysine.

It belongs to the class-II pyridoxal-phosphate-dependent aminotransferase family. Histidinol-phosphate aminotransferase subfamily. In terms of assembly, homodimer. Requires pyridoxal 5'-phosphate as cofactor.

It carries out the reaction L-histidinol phosphate + 2-oxoglutarate = 3-(imidazol-4-yl)-2-oxopropyl phosphate + L-glutamate. The protein operates within amino-acid biosynthesis; L-histidine biosynthesis; L-histidine from 5-phospho-alpha-D-ribose 1-diphosphate: step 7/9. This chain is Histidinol-phosphate aminotransferase, found in Oleidesulfovibrio alaskensis (strain ATCC BAA-1058 / DSM 17464 / G20) (Desulfovibrio alaskensis).